The following is a 287-amino-acid chain: Bifunctional protein FolD (287 aa).

Residues 166–168 (GAS) and isoleucine 232 contribute to the NADP(+) site.

This sequence belongs to the tetrahydrofolate dehydrogenase/cyclohydrolase family. As to quaternary structure, homodimer.

The enzyme catalyses (6R)-5,10-methylene-5,6,7,8-tetrahydrofolate + NADP(+) = (6R)-5,10-methenyltetrahydrofolate + NADPH. The catalysed reaction is (6R)-5,10-methenyltetrahydrofolate + H2O = (6R)-10-formyltetrahydrofolate + H(+). It functions in the pathway one-carbon metabolism; tetrahydrofolate interconversion. Functionally, catalyzes the oxidation of 5,10-methylenetetrahydrofolate to 5,10-methenyltetrahydrofolate and then the hydrolysis of 5,10-methenyltetrahydrofolate to 10-formyltetrahydrofolate. The polypeptide is Bifunctional protein FolD (Pectobacterium carotovorum subsp. carotovorum (strain PC1)).